Here is a 297-residue protein sequence, read N- to C-terminus: Light-independent protochlorophyllide reductase iron-sulfur ATP-binding protein (297 aa).

Residues 41–46 and Lys70 each bind ATP; that span reads GIGKST. Residue Ser45 coordinates Mg(2+). Residues Cys126 and Cys160 each coordinate [4Fe-4S] cluster. ATP-binding positions include 211 to 212 and 235 to 237; these read NR and PDL.

Belongs to the NifH/BchL/ChlL family. Homodimer. Protochlorophyllide reductase is composed of three subunits; BchL, BchN and BchB. [4Fe-4S] cluster is required as a cofactor.

It carries out the reaction chlorophyllide a + oxidized 2[4Fe-4S]-[ferredoxin] + 2 ADP + 2 phosphate = protochlorophyllide a + reduced 2[4Fe-4S]-[ferredoxin] + 2 ATP + 2 H2O. Its pathway is porphyrin-containing compound metabolism; bacteriochlorophyll biosynthesis (light-independent). Its function is as follows. Component of the dark-operative protochlorophyllide reductase (DPOR) that uses Mg-ATP and reduced ferredoxin to reduce ring D of protochlorophyllide (Pchlide) to form chlorophyllide a (Chlide). This reaction is light-independent. The L component serves as a unique electron donor to the NB-component of the complex, and binds Mg-ATP. This chain is Light-independent protochlorophyllide reductase iron-sulfur ATP-binding protein, found in Methylorubrum populi (strain ATCC BAA-705 / NCIMB 13946 / BJ001) (Methylobacterium populi).